We begin with the raw amino-acid sequence, 4427 residues long: Dynein axonemal heavy chain 2 (4427 aa).

The interval 1–73 (MSSKAEKKQR…AQSEESVEPE (73 aa)) is disordered. Positions 1-1764 (MSSKAEKKQR…VIRQTNTQFQ (1764 aa)) are stem. Residues 14–23 (RGSSQASWSG) are compositionally biased toward polar residues. Residues 50 to 59 (LPKEEPEPRL) show a composition bias toward basic and acidic residues. Residues 1404 to 1439 (EDNQVALSTMKASRFVKAFEKDVDHWERCLSLILEV) form a TPR 1 repeat. AAA stretches follow at residues 1765–1986 (YNYE…LLRY), 2046–2273 (ETVE…DNCK), 2378–2625 (RYPP…VFQG), and 2722–2974 (EYNL…LRRH). ATP is bound by residues 1803 to 1810 (GPAGTGKT), 2084 to 2091 (GCTGSGKT), and 2416 to 2423 (GPVGTGKT). The TPR 2 repeat unit spans residues 2721-2754 (NEYNLSPSVVPMQLVLFREAIEHITRIVRVIGQP). Position 2762–2769 (2762–2769 (GIGGSGRQ)) interacts with ATP. The tract at residues 2989–3272 (YKKLLGEKRQ…EELRKKSEEM (284 aa)) is stalk. Residues 3012-3049 (FKIDETREKVQVMSLELEDAKKKVAEFQKQCEEYLVII) are a coiled coil. The stretch at 3072-3105 (VEEIKCQALADNAQKDLEEALPALEEAMRALESL) is one TPR 3 repeat. 2 coiled-coil regions span residues 3216-3304 (KRIR…EEDL) and 3523-3567 (VRKE…GSLL). AAA stretches follow at residues 3358–3588 (LCNP…EVTE) and 3804–4023 (VTSF…LLSL). TPR repeat units follow at residues 4072–4104 (STPF…LLPG) and 4105–4140 (MDPP…QPQI).

Belongs to the dynein heavy chain family. As to quaternary structure, part of the axonemal inner dynein arm complex that consists of at least two heavy chains and a number of intermediate and light chains. Interacts with DNAI4. Expressed primarily in trachea and testis, 2 tissues containing axonemal structures. Also expressed in lung. Expressed in spermatozoa (at protein level).

The protein resides in the cytoplasm. It is found in the cytoskeleton. Its subcellular location is the cilium axoneme. The protein localises to the flagellum axoneme. As part of the axonemal inner dynein arm complex plays a central role in ciliary beat. Expressed in sperm flagellum, it is required for sperm motility. Dyneins are microtubule-based molecular motors possessing ATPase activities that can convert the chemical energy of ATP into relative sliding between adjacent microtubule doublets to generate ciliary bending. This Homo sapiens (Human) protein is Dynein axonemal heavy chain 2.